Reading from the N-terminus, the 164-residue chain is Ribosome maturation factor RimP (164 aa).

This sequence belongs to the RimP family.

It is found in the cytoplasm. In terms of biological role, required for maturation of 30S ribosomal subunits. The chain is Ribosome maturation factor RimP from Mycoplasma mycoides subsp. mycoides SC (strain CCUG 32753 / NCTC 10114 / PG1).